The sequence spans 583 residues: NudC domain-containing protein 1 (583 aa).

A Phosphoserine modification is found at serine 8. In terms of domain architecture, CS spans 273–361 (IKEPLYYWQQ…NEGLTWPELV (89 aa)). At serine 388 the chain carries Phosphoserine.

As to expression, isoform 1 is specifically expressed in leukemias and a variety of solid tumor cell lines and is also detected in testis and heart. Isoform 2 is predominantly expressed in testis and weakly expressed in tumor cells.

It localises to the cytoplasm. It is found in the nucleus. The polypeptide is NudC domain-containing protein 1 (Homo sapiens (Human)).